The chain runs to 519 residues: Acetylcholine receptor subunit beta-like 2 (519 aa).

An N-terminal signal peptide occupies residues 1-18; the sequence is MWHWSLLCVFLLVPLANS. At 19-244 the chain is on the extracellular side; it reads TAPISFEANP…ITFKLTMRRK (226 aa). Residue Asn50 is glycosylated (N-linked (GlcNAc...) asparagine). The cysteines at positions 154 and 168 are disulfide-linked. 3 consecutive transmembrane segments (helical) span residues 245-269, 277-295, and 311-332; these read TLFY…VFYL, VTLC…LLLA, and YLLF…VLNI. The Cytoplasmic portion of the chain corresponds to 333 to 462; that stretch reads HFRSPSTHNM…WKFVSMVLDR (130 aa). Residues 463-481 form a helical membrane-spanning segment; that stretch reads FFLWLFTLSCVFGTLAIIC.

This sequence belongs to the ligand-gated ion channel (TC 1.A.9) family. Acetylcholine receptor (TC 1.A.9.1) subfamily. As to expression, CNS in embryos.

The protein resides in the postsynaptic cell membrane. It localises to the cell membrane. In terms of biological role, after binding acetylcholine, the AChR responds by an extensive change in conformation that affects all subunits and leads to opening of an ion-conducting channel across the plasma membrane. The chain is Acetylcholine receptor subunit beta-like 2 (nAChRbeta2) from Drosophila melanogaster (Fruit fly).